A 612-amino-acid chain; its full sequence is Dihydroxy-acid dehydratase (612 aa).

Asp81 is a Mg(2+) binding site. Cys122 contributes to the [2Fe-2S] cluster binding site. The Mg(2+) site is built by Asp123 and Lys124. Lys124 is modified (N6-carboxylysine). Cys195 contacts [2Fe-2S] cluster. Glu491 is a binding site for Mg(2+). Residue Ser517 is the Proton acceptor of the active site.

This sequence belongs to the IlvD/Edd family. In terms of assembly, homodimer. The cofactor is [2Fe-2S] cluster. Mg(2+) serves as cofactor.

The catalysed reaction is (2R)-2,3-dihydroxy-3-methylbutanoate = 3-methyl-2-oxobutanoate + H2O. It catalyses the reaction (2R,3R)-2,3-dihydroxy-3-methylpentanoate = (S)-3-methyl-2-oxopentanoate + H2O. It participates in amino-acid biosynthesis; L-isoleucine biosynthesis; L-isoleucine from 2-oxobutanoate: step 3/4. The protein operates within amino-acid biosynthesis; L-valine biosynthesis; L-valine from pyruvate: step 3/4. Functionally, functions in the biosynthesis of branched-chain amino acids. Catalyzes the dehydration of (2R,3R)-2,3-dihydroxy-3-methylpentanoate (2,3-dihydroxy-3-methylvalerate) into 2-oxo-3-methylpentanoate (2-oxo-3-methylvalerate) and of (2R)-2,3-dihydroxy-3-methylbutanoate (2,3-dihydroxyisovalerate) into 2-oxo-3-methylbutanoate (2-oxoisovalerate), the penultimate precursor to L-isoleucine and L-valine, respectively. This is Dihydroxy-acid dehydratase from Haemophilus influenzae (strain PittGG).